The primary structure comprises 896 residues: MTTTAQDNSPKKRQRIINCVTQLPYKIQLGESNDDWKISATTGNSALFSSLEYLQFDSTEYEQHVVGWTGEITRTERNLFTREAKEKPQDLDDDPLYLTKEQINGLTTTLQDHMKSDKEAKTDTTQTAPVTNNVHPVWLLRKNQSRWRNYAEKVIWPTFHYILNPSNEGEQEKNWWYDYVKFNEAYAQKIGEVYRKGDIIWIHDYYLLLLPQLLRMKFNDESIIIGYFHHAPWPSNEYFRCLPRRKQILDGLVGANRICFQNESFSRHFVSSCKRLLDATAKKSKNSSNSDQYQVSVYGGDVLVDSLPIGVNTTQILKDAFTKDIDSKVLSIKQAYQNKKIIIGRDRLDSVRGVVQKLRAFETFLAMYPEWRDQVVLIQVSSPTANRNSPQTIRLEQQVNELVNSINSEYGNLNFSPVQHYYMRIPKDVYLSLLRVADLCLITSVRDGMNTTALEYVTVKSHMSNFLCYGNPLILSEFSGSSNVLKDAIVVNPWDSVAVAKSINMALKLDKEEKSNLESKLWKEVPTIQDWTNKFLSSLKEQASSNDDMERKMTPALNRPVLLENYKQAKRRLFLFDYDGTLTPIVKDPAAAIPSARLYTILQKLCADPHNQIWIISGRDQKFLNKWLGGKLPQLGLSAEHGCFMKDVSCQDWVNLTEKVDMSWQVRVNEVMEEFTTRTPGSFIERKKVALTWHYRRTVPELGEFHAKELKEKLLSFTDDFDLEVMDGKANIEVRPRFVNKGEIVKRLVWHQHGKPQDMLKGISEKLPKDEMPDFVLCLGDDFTDEDMFRQLNTIETCWKEKYPDQKNQWGNYGFYPVTVGSASKKTVAKAHLTDPQQVLETLGLLVGDVSLFQSAGTVDLDSRGHVKNSESSLKSKLASKAYVMKRSASYTGAKV.

The tract at residues 1–554 (MTTTAQDNSP…SNDDMERKMT (554 aa)) is glycosyltransferase.

This sequence in the N-terminal section; belongs to the glycosyltransferase 20 family. It in the C-terminal section; belongs to the trehalose phosphatase family. As to quaternary structure, the trehalose synthase complex is composed of the two catalytic subunits TPS1 and TPS2, and at least one of the two regulatory subunits TPS3 or TSL1. Mg(2+) is required as a cofactor.

The protein localises to the cytoplasm. It carries out the reaction alpha,alpha-trehalose 6-phosphate + H2O = alpha,alpha-trehalose + phosphate. Its pathway is carbohydrate biosynthesis. Inhibited by EDTA. In terms of biological role, phosphatase catalytic subunit of the trehalose synthase complex that catalyzes the production of trehalose from glucose-6-phosphate and UDP-alpha-D-glucose in a two step process. The polypeptide is Trehalose-phosphatase (Saccharomyces cerevisiae (strain ATCC 204508 / S288c) (Baker's yeast)).